The following is a 604-amino-acid chain: Structure-specific endonuclease subunit MUS81 (604 aa).

Disordered stretches follow at residues 93–138, 227–248, and 253–272; these read AAVH…REYV, KLDSEETGTRHEDVDSQDGQNV, and LEEEDEDEEKESWSSERPAV. 2 stretches are compositionally biased toward basic and acidic residues: residues 116–128 and 227–240; these read EHTKLTQKEVRKE and KLDSEETGTRHEDV. Positions 138 to 254 are winged helix domain (WHD); critical for endonuclease activity; the sequence is VPQKRSGGYA…GQNVVDLTLE (117 aa). Acidic residues predominate over residues 253 to 262; the sequence is LEEEDEDEEK. Residues 314–423 form the ERCC4 domain; the sequence is VLCVDLCETT…KPIYLVEECG (110 aa). Residues aspartate 318, glutamate 321, and aspartate 353 contribute to the active site. Mg(2+) contacts are provided by aspartate 318, glutamate 321, aspartate 353, glutamate 384, and arginine 385. A helix-hairpin-helix (2HhH); involved in DNA recognition and bending region spans residues 524-598; it reads VREVFARQLM…LSRTIYQLYC (75 aa).

Belongs to the XPF family. In terms of assembly, part of the heterodimeric DNA structure-specific endonuclease complex MUS81-EME1. Part of the heterodimeric DNA structure-specific endonuclease complex MUS81-EME2. Mg(2+) is required as a cofactor.

It is found in the nucleus. Its subcellular location is the nucleolus. Functionally, catalytic subunit of two functionally distinct, structure-specific, heterodimeric DNA endonucleases MUS81-EME1 and MUS81-EME2 that are involved in the maintenance of genome stability. Both endonucleases have essentially the same substrate specificity though MUS81-EME2 is more active than its MUS81-EME1 counterpart. Both cleave 3'-flaps and nicked Holliday junctions, and exhibit limited endonuclease activity with 5' flaps and nicked double-stranded DNAs. MUS81-EME2 which is active during the replication of DNA is more specifically involved in replication fork processing. Replication forks frequently encounter obstacles to their passage, including DNA base lesions, DNA interstrand cross-links, difficult-to-replicate sequences, transcription bubbles, or tightly bound proteins. One mechanism for the restart of a stalled replication fork involves nucleolytic cleavage mediated by the MUS81-EME2 endonuclease. By acting upon the stalled fork, MUS81-EME2 generates a DNA double-strand break (DSB) that can be repaired by homologous recombination, leading to the restoration of an active fork. MUS81-EME2 could also function in telomere maintenance. MUS81-EME1, on the other hand, is active later in the cell cycle and functions in the resolution of mitotic recombination intermediates including the Holliday junctions, the four-way DNA intermediates that form during homologous recombination. In Danio rerio (Zebrafish), this protein is Structure-specific endonuclease subunit MUS81 (mus81).